The primary structure comprises 447 residues: Diaminopimelate decarboxylase (447 aa).

An N6-(pyridoxal phosphate)lysine modification is found at Lys-72. Pyridoxal 5'-phosphate-binding positions include Gly-258 and 300–303 (EPGR). 3 residues coordinate substrate: Arg-303, Arg-344, and Tyr-348. Cys-375 functions as the Proton donor in the catalytic mechanism. Residues Glu-376 and Tyr-405 each coordinate substrate. Tyr-405 lines the pyridoxal 5'-phosphate pocket.

Belongs to the Orn/Lys/Arg decarboxylase class-II family. LysA subfamily. As to quaternary structure, homodimer. It depends on pyridoxal 5'-phosphate as a cofactor.

The catalysed reaction is meso-2,6-diaminopimelate + H(+) = L-lysine + CO2. It functions in the pathway amino-acid biosynthesis; L-lysine biosynthesis via DAP pathway; L-lysine from DL-2,6-diaminopimelate: step 1/1. In terms of biological role, specifically catalyzes the decarboxylation of meso-diaminopimelate (meso-DAP) to L-lysine. The polypeptide is Diaminopimelate decarboxylase (Mycobacterium bovis (strain ATCC BAA-935 / AF2122/97)).